Reading from the N-terminus, the 400-residue chain is Snake venom metalloproteinase H1 (400 aa).

An N-terminal signal peptide occupies residues Phe1–Ser6. The propeptide occupies Ser7–Thr176. In terms of domain architecture, Peptidase M12B spans Arg180–Pro377. Ca(2+)-binding residues include Glu183 and Asp267. Disulfide bonds link Cys291/Cys372, Cys331/Cys356, and Cys333/Cys339. Position 316 (His316) interacts with Zn(2+). Residue Glu317 is part of the active site. Residues His320 and His326 each contribute to the Zn(2+) site. The Ca(2+) site is built by Cys372, Asn375, Val387, Asn390, Leu392, Glu394, and Asp400. Positions Leu378–Asp400 are excised as a propeptide.

This sequence belongs to the venom metalloproteinase (M12B) family. P-I subfamily. Monomer. Requires Zn(2+) as cofactor. As to expression, expressed by the venom gland.

It is found in the secreted. Snake venom metalloproteinase that impairs hemostasis in the envenomed animal. In Deinagkistrodon acutus (Hundred-pace snake), this protein is Snake venom metalloproteinase H1.